Reading from the N-terminus, the 643-residue chain is Threonine--tRNA ligase (643 aa).

In terms of domain architecture, TGS spans 1–61; it reads MPTIKFIDGT…TNDSIVKFVY (61 aa). The catalytic stretch occupies residues 244–535; it reads DHRKISKILD…LIEEYIGNFP (292 aa). Zn(2+) is bound by residues Cys335, His386, and His512.

The protein belongs to the class-II aminoacyl-tRNA synthetase family. In terms of assembly, homodimer. Zn(2+) is required as a cofactor.

The protein resides in the cytoplasm. It catalyses the reaction tRNA(Thr) + L-threonine + ATP = L-threonyl-tRNA(Thr) + AMP + diphosphate + H(+). Its function is as follows. Catalyzes the attachment of threonine to tRNA(Thr) in a two-step reaction: L-threonine is first activated by ATP to form Thr-AMP and then transferred to the acceptor end of tRNA(Thr). Also edits incorrectly charged L-seryl-tRNA(Thr). This chain is Threonine--tRNA ligase, found in Buchnera aphidicola subsp. Baizongia pistaciae (strain Bp).